The primary structure comprises 102 residues: Cuticle protein AM/CP1114 (102 aa).

Residues 16-81 (DGNFHYSFET…VESPLLPSIP (66 aa)) enclose the Chitin-binding type R&amp;R domain. Residues 23–33 (FETSNGIQDTK) are compositionally biased toward polar residues. The disordered stretch occupies residues 23–50 (FETSNGIQDTKTGVPGSAGQSNMNGDFS).

In terms of tissue distribution, arthrodial membrane and calcified shell.

The sequence is that of Cuticle protein AM/CP1114 from Cancer pagurus (Rock crab).